Reading from the N-terminus, the 72-residue chain is Translation initiation factor IF-1 (72 aa).

The 72-residue stretch at 1–72 folds into the S1-like domain; it reads MAKEDNFELE…SKGRITYRAR (72 aa).

Belongs to the IF-1 family. Component of the 30S ribosomal translation pre-initiation complex which assembles on the 30S ribosome in the order IF-2 and IF-3, IF-1 and N-formylmethionyl-tRNA(fMet); mRNA recruitment can occur at any time during PIC assembly.

The protein localises to the cytoplasm. Its function is as follows. One of the essential components for the initiation of protein synthesis. Stabilizes the binding of IF-2 and IF-3 on the 30S subunit to which N-formylmethionyl-tRNA(fMet) subsequently binds. Helps modulate mRNA selection, yielding the 30S pre-initiation complex (PIC). Upon addition of the 50S ribosomal subunit IF-1, IF-2 and IF-3 are released leaving the mature 70S translation initiation complex. The polypeptide is Translation initiation factor IF-1 (Saccharophagus degradans (strain 2-40 / ATCC 43961 / DSM 17024)).